Consider the following 689-residue polypeptide: Glycine--tRNA ligase beta subunit (689 aa).

Belongs to the class-II aminoacyl-tRNA synthetase family. In terms of assembly, tetramer of two alpha and two beta subunits.

The protein resides in the cytoplasm. The catalysed reaction is tRNA(Gly) + glycine + ATP = glycyl-tRNA(Gly) + AMP + diphosphate. The protein is Glycine--tRNA ligase beta subunit of Actinobacillus pleuropneumoniae serotype 3 (strain JL03).